The sequence spans 727 residues: Alpha-1,3-galactosidase A (727 aa).

The interval 220 to 241 (ATNRTWRTSNPVFPERHEDHRP) is disordered. Residues 221–230 (TNRTWRTSNP) are compositionally biased toward polar residues. PbH1 repeat units lie at residues 336–358 (KGTVRITNSVFDNPQDDPINIHG), 461–483 (TPTVEITGNTFQAVPTRGILVTT), 484–506 (RRPVRIENNRFDGMSMASIYISS), 517–538 (VRNVTIRGNVFDRPASPVIFFD), 551–572 (HRNVLIEDNDFNLTGGTILSGR), and 574–603 (VGGLTFRDNRVERYPHLRLTGPSRALRVGD).

The protein belongs to the glycosyl hydrolase 110 family. A subfamily.

The enzyme catalyses Hydrolysis of terminal, non-reducing branched (1-&gt;3)-alpha-D-galactosidic residues, producing free D-galactose.. It carries out the reaction Hydrolysis of terminal, non-reducing alpha-D-galactose residues in alpha-D-galactosides, including galactose oligosaccharides, galactomannans and galactolipids.. Functionally, alpha-galactosidase that specifically removes branched alpha-1,3-linked galactose residues present in blood group B antigens. Has no activity toward linear alpha-1,3-linked galactose residues. The chain is Alpha-1,3-galactosidase A (glaA) from Peterkaempfera griseoplana (Streptacidiphilus griseoplanus).